Here is a 134-residue protein sequence, read N- to C-terminus: Large ribosomal subunit protein bL19 (134 aa).

The disordered stretch occupies residues 110–134 (ARLHQEEGPSSAAPASTPPAAAPQA). Positions 125–134 (STPPAAAPQA) are enriched in pro residues.

The protein belongs to the bacterial ribosomal protein bL19 family.

Its function is as follows. This protein is located at the 30S-50S ribosomal subunit interface and may play a role in the structure and function of the aminoacyl-tRNA binding site. The chain is Large ribosomal subunit protein bL19 from Anaeromyxobacter sp. (strain Fw109-5).